Consider the following 545-residue polypeptide: Pectinesterase/pectinesterase inhibitor (545 aa).

The N-terminal stretch at 1–37 (MEINQPNLLEASKSCYSKITFFLLVISFAALVSTGFS) is a signal peptide. A pectinesterase inhibitor region spans residues 38–191 (SPELSLHHKI…ILRARTSLAI (154 aa)). Residues 38–228 (SPELSLHHKI…RRLLQTLGKD (191 aa)) constitute a propeptide that is removed on maturation. N135 carries N-linked (GlcNAc...) asparagine glycosylation. The interval 232–530 (DIVVAKDGSG…TVAELIQGGS (299 aa)) is pectinesterase. 2 residues coordinate substrate: T307 and Q337. C326 and C353 are oxidised to a cystine. D360 acts as the Proton donor; for pectinesterase activity in catalysis. N-linked (GlcNAc...) (complex) asparagine glycosylation is present at N375. Catalysis depends on D381, which acts as the Nucleophile; for pectinesterase activity. C394 and C428 form a disulfide bridge. Positions 449 and 451 each coordinate substrate.

It in the N-terminal section; belongs to the PMEI family. This sequence in the C-terminal section; belongs to the pectinesterase family. In terms of processing, N-glycosylated.

The protein localises to the secreted. Its subcellular location is the cell wall. It carries out the reaction [(1-&gt;4)-alpha-D-galacturonosyl methyl ester](n) + n H2O = [(1-&gt;4)-alpha-D-galacturonosyl](n) + n methanol + n H(+). Its pathway is glycan metabolism; pectin degradation; 2-dehydro-3-deoxy-D-gluconate from pectin: step 1/5. Acts in the modification of cell walls via demethylesterification of cell wall pectin. This Ficus pumila var. awkeotsang (Jelly fig) protein is Pectinesterase/pectinesterase inhibitor.